The chain runs to 307 residues: Probable GTP 3',8-cyclase (307 aa).

Residues 5–231 (RFGRPVTNLR…MHRRKKYFIP (227 aa)) form the Radical SAM core domain. Arg14 lines the GTP pocket. Residues Cys21, Cys25, and Cys28 each contribute to the [4Fe-4S] cluster site. Lys62 provides a ligand contact to GTP. Position 66 (Gly66) interacts with S-adenosyl-L-methionine. Residue Thr91 participates in GTP binding. Ser115 contacts S-adenosyl-L-methionine. Lys151 serves as a coordination point for GTP. S-adenosyl-L-methionine is bound at residue Met190. Positions 251 and 254 each coordinate [4Fe-4S] cluster. 256 to 258 (RLR) is a GTP binding site. Cys268 provides a ligand contact to [4Fe-4S] cluster.

This sequence belongs to the radical SAM superfamily. MoaA family. It depends on [4Fe-4S] cluster as a cofactor.

It catalyses the reaction GTP + AH2 + S-adenosyl-L-methionine = (8S)-3',8-cyclo-7,8-dihydroguanosine 5'-triphosphate + 5'-deoxyadenosine + L-methionine + A + H(+). It participates in cofactor biosynthesis; molybdopterin biosynthesis. Catalyzes the cyclization of GTP to (8S)-3',8-cyclo-7,8-dihydroguanosine 5'-triphosphate. This chain is Probable GTP 3',8-cyclase, found in Thermococcus kodakarensis (strain ATCC BAA-918 / JCM 12380 / KOD1) (Pyrococcus kodakaraensis (strain KOD1)).